Reading from the N-terminus, the 158-residue chain is Nucleoside diphosphate kinase (158 aa).

ATP is bound by residues K16, F64, R92, T98, R109, and N119. Catalysis depends on H122, which acts as the Pros-phosphohistidine intermediate.

This sequence belongs to the NDK family. Mg(2+) serves as cofactor.

Its subcellular location is the cytoplasm. The enzyme catalyses a 2'-deoxyribonucleoside 5'-diphosphate + ATP = a 2'-deoxyribonucleoside 5'-triphosphate + ADP. It catalyses the reaction a ribonucleoside 5'-diphosphate + ATP = a ribonucleoside 5'-triphosphate + ADP. Functionally, major role in the synthesis of nucleoside triphosphates other than ATP. The ATP gamma phosphate is transferred to the NDP beta phosphate via a ping-pong mechanism, using a phosphorylated active-site intermediate. This is Nucleoside diphosphate kinase from Haloquadratum walsbyi (strain DSM 16790 / HBSQ001).